Reading from the N-terminus, the 334-residue chain is MSEPIRVLVTGAAGQIAYSLLYSIGNGSVFGKDQPIILVLLDITPMMGVLDGVLMELQDCALPLLQDVIATDKEEVAFKDLDVAVLVGSMPRREGMERKDLLKANVKIFKSQGAALEKYAKKSVKVIVVGNPANTNCLTASKSAPSIPKENFSCLTRLDHNRAKSQIALKLGVTADDVKNVIIWGNHSSTQYPDVNHAKVKLQGKEVGVYEALKDDSWLKGEFITTVQQRGAAVIKARKLSSAMSAAKAISDHIRDIWFGTPEGEFVSMGVISDGNSYGVPDDLLYSFPVVIKNKTWKFVEGLPINDFSREKMDLTAKELTEEKETAFEFLSSA.

Ser-2 carries the N-acetylserine modification. Residues Gly-11–Ala-17 and Asp-42 each bind NAD(+). The substrate site is built by Arg-92 and Arg-98. Asn-105 contributes to the NAD(+) binding site. Lys-110 carries the N6-succinyllysine modification. Gln-112 lines the NAD(+) pocket. Residues Lys-118 and Lys-121 each carry the N6-acetyllysine modification. Val-129–Asn-131 provides a ligand contact to NAD(+). Positions 131 and 162 each coordinate substrate. His-187 serves as the catalytic Proton acceptor. An N6-succinyllysine modification is found at Lys-214. Residue Ser-217 is modified to Phosphoserine. Residue Arg-230 is modified to Omega-N-methylarginine. Phosphoserine is present on Ser-241. Position 298 is an N6-acetyllysine; alternate (Lys-298). Lys-298 carries the post-translational modification N6-succinyllysine; alternate. Ser-309 bears the Phosphoserine mark. Lys-318 is subject to N6-succinyllysine. A phosphoserine mark is found at Ser-332 and Ser-333.

The protein belongs to the LDH/MDH superfamily. MDH type 2 family. In terms of assembly, homodimer. ISGylated. In terms of processing, acetylation at Lys-118 dramatically enhances enzymatic activity and promotes adipogenic differentiation.

It localises to the cytoplasm. Its subcellular location is the cytosol. The enzyme catalyses (S)-malate + NAD(+) = oxaloacetate + NADH + H(+). It carries out the reaction (2R)-2-hydroxy-3-(4-hydroxyphenyl)propanoate + NAD(+) = 3-(4-hydroxyphenyl)pyruvate + NADH + H(+). The catalysed reaction is (S)-2-hydroxyglutarate + NAD(+) = 2-oxoglutarate + NADH + H(+). In terms of biological role, catalyzes the reduction of aromatic alpha-keto acids in the presence of NADH. Plays essential roles in the malate-aspartate shuttle and the tricarboxylic acid cycle, important in mitochondrial NADH supply for oxidative phosphorylation. Catalyzes the reduction of 2-oxoglutarate to 2-hydroxyglutarate, leading to elevated reactive oxygen species (ROS). This Rattus norvegicus (Rat) protein is Malate dehydrogenase, cytoplasmic (Mdh1).